Consider the following 265-residue polypeptide: Anaphase-promoting complex subunit 9 (265 aa).

As to quaternary structure, the APC/C is composed of at least 13 subunits that stay tightly associated throughout the cell cycle: APC1, APC2, APC4, APC5, APC9, APC11, CDC16, CDC23, CDC26, CDC27, DOC1, MND2 and SWM1.

The protein localises to the cytoplasm. It localises to the nucleus. It functions in the pathway protein modification; protein ubiquitination. Its function is as follows. Component of the anaphase promoting complex/cyclosome (APC/C), a cell cycle-regulated E3 ubiquitin-protein ligase complex that controls progression through mitosis and the G1 phase of the cell cycle. The APC/C is thought to confer substrate specificity and, in the presence of ubiquitin-conjugating E2 enzymes, it catalyzes the formation of protein-ubiquitin conjugates that are subsequently degraded by the 26S proteasome. In early mitosis, the APC/C is activated by CDC20 and targets securin PDS1, the B-type cyclin CLB5, and other anaphase inhibitory proteins for proteolysis, thereby triggering the separation of sister chromatids at the metaphase-to-anaphase transition. In late mitosis and in G1, degradation of CLB5 allows activation of the APC/C by CDH1, which is needed to destroy CDC20 and the B-type cyclin CLB2 to allow exit from mitosis and creating the low CDK state necessary for cytokinesis and for reforming prereplicative complexes in G1 prior to another round of replication. In Saccharomyces cerevisiae (strain ATCC 204508 / S288c) (Baker's yeast), this protein is Anaphase-promoting complex subunit 9 (APC9).